A 301-amino-acid chain; its full sequence is Phosducin-like protein (301 aa).

Residue T2 is modified to N-acetylthreonine. The interval Y15–I53 is disordered. 5 positions are modified to phosphoserine: S20, S25, S226, S293, and S296. The Phosducin domain occupies L37–E299. The segment at F158–D301 is thioredoxin fold.

This sequence belongs to the phosducin family. In terms of assembly, forms a complex with the beta and gamma subunits of the GTP-binding protein, transducin. Interacts with the CCT chaperonin complex.

It localises to the cell projection. It is found in the cilium. Functions as a co-chaperone for CCT in the assembly of heterotrimeric G protein complexes, facilitates the assembly of both Gbeta-Ggamma and RGS-Gbeta5 heterodimers. Also acts as a positive regulator of hedgehog signaling and regulates ciliary function. This is Phosducin-like protein (PDCL) from Bos taurus (Bovine).